We begin with the raw amino-acid sequence, 477 residues long: Bifunctional protein HldE (477 aa).

A ribokinase region spans residues 1 to 318; it reads MKVTLPEFER…ENAVRGRADT (318 aa). At Lys179 the chain carries N6-acetyllysine. 195–198 contacts ATP; sequence NLSE. Residue Asp264 is part of the active site. Residues 344-477 are cytidylyltransferase; the sequence is MTNGVFDILH…IKKIQQDKKG (134 aa).

The protein in the N-terminal section; belongs to the carbohydrate kinase PfkB family. It in the C-terminal section; belongs to the cytidylyltransferase family. As to quaternary structure, homodimer.

It carries out the reaction D-glycero-beta-D-manno-heptose 7-phosphate + ATP = D-glycero-beta-D-manno-heptose 1,7-bisphosphate + ADP + H(+). It catalyses the reaction D-glycero-beta-D-manno-heptose 1-phosphate + ATP + H(+) = ADP-D-glycero-beta-D-manno-heptose + diphosphate. Its pathway is nucleotide-sugar biosynthesis; ADP-L-glycero-beta-D-manno-heptose biosynthesis; ADP-L-glycero-beta-D-manno-heptose from D-glycero-beta-D-manno-heptose 7-phosphate: step 1/4. It participates in nucleotide-sugar biosynthesis; ADP-L-glycero-beta-D-manno-heptose biosynthesis; ADP-L-glycero-beta-D-manno-heptose from D-glycero-beta-D-manno-heptose 7-phosphate: step 3/4. Its function is as follows. Catalyzes the phosphorylation of D-glycero-D-manno-heptose 7-phosphate at the C-1 position to selectively form D-glycero-beta-D-manno-heptose-1,7-bisphosphate. In terms of biological role, catalyzes the ADP transfer from ATP to D-glycero-beta-D-manno-heptose 1-phosphate, yielding ADP-D-glycero-beta-D-manno-heptose. In Escherichia coli (strain 55989 / EAEC), this protein is Bifunctional protein HldE.